Reading from the N-terminus, the 208-residue chain is MIGFLQGYVVSLQQTSTHRTLLTLDVNQVGYDLYVPSRIRQHLPPDQEQMRVFTHLQVREDQMVLFGFAVVAERDLFRQLIAVSGIGPQLALALIDTLGLQDLVQAIVNSNTKMLVKTPGVGAKTAERIALELRSKLAEWRDQAGLKTLPSAGPIDSVQEDVEMTLLALGYTSQEVMRALQAVGQNTALAKNSDTEAWIREAIAWLSQ.

The tract at residues 1 to 69 is domain I; that stretch reads MIGFLQGYVV…EDQMVLFGFA (69 aa). The tract at residues 70–148 is domain II; the sequence is VVAERDLFRQ…EWRDQAGLKT (79 aa). Positions 149–159 are flexible linker; it reads LPSAGPIDSVQ. Residues 159–208 are domain III; that stretch reads QEDVEMTLLALGYTSQEVMRALQAVGQNTALAKNSDTEAWIREAIAWLSQ.

Belongs to the RuvA family. In terms of assembly, homotetramer. Forms an RuvA(8)-RuvB(12)-Holliday junction (HJ) complex. HJ DNA is sandwiched between 2 RuvA tetramers; dsDNA enters through RuvA and exits via RuvB. An RuvB hexamer assembles on each DNA strand where it exits the tetramer. Each RuvB hexamer is contacted by two RuvA subunits (via domain III) on 2 adjacent RuvB subunits; this complex drives branch migration. In the full resolvosome a probable DNA-RuvA(4)-RuvB(12)-RuvC(2) complex forms which resolves the HJ.

The protein localises to the cytoplasm. In terms of biological role, the RuvA-RuvB-RuvC complex processes Holliday junction (HJ) DNA during genetic recombination and DNA repair, while the RuvA-RuvB complex plays an important role in the rescue of blocked DNA replication forks via replication fork reversal (RFR). RuvA specifically binds to HJ cruciform DNA, conferring on it an open structure. The RuvB hexamer acts as an ATP-dependent pump, pulling dsDNA into and through the RuvAB complex. HJ branch migration allows RuvC to scan DNA until it finds its consensus sequence, where it cleaves and resolves the cruciform DNA. This Acaryochloris marina (strain MBIC 11017) protein is Holliday junction branch migration complex subunit RuvA.